Here is a 99-residue protein sequence, read N- to C-terminus: Putative protein adenylyltransferase MJ0141 (99 aa).

The GSX(10)DXD motif motif lies at 29–43 (GSYARGDYDEESDVD). Residues Asp-41 and Asp-43 each coordinate Mg(2+).

This sequence belongs to the MntA antitoxin family. Requires Mg(2+) as cofactor.

The catalysed reaction is L-tyrosyl-[protein] + ATP = O-(5'-adenylyl)-L-tyrosyl-[protein] + diphosphate. It carries out the reaction O-(5'-adenylyl)-L-tyrosyl-[protein] + ATP = O-[5'-(adenylyl-(5'-&gt;3')-adenylyl)]-L-tyrosyl-[protein] + diphosphate. Putative antitoxin component of a putative type VII toxin-antitoxin (TA) system. Its cognate toxin might be MF0142, which it might AMPylate. This is Putative protein adenylyltransferase MJ0141 from Methanocaldococcus jannaschii (strain ATCC 43067 / DSM 2661 / JAL-1 / JCM 10045 / NBRC 100440) (Methanococcus jannaschii).